Consider the following 127-residue polypeptide: MRYGEKEIKEFDVENMEIWPNDAKNDYIIKITLPEFMCCCPRSGYPDFATIYLEYMPNKFVVELKAIKLYINTFMYRNVSHEASINEIYNTLKDKLKPKWIKVVGDFNPRGNVHTVIECRSDMVVPK.

Cys40 acts as the Thioimide intermediate in catalysis. Asp47 functions as the Proton donor in the catalytic mechanism. Substrate is bound by residues 62–64 and 81–82; these read VEL and HE.

Belongs to the GTP cyclohydrolase I family. QueF type 1 subfamily.

It localises to the cytoplasm. It catalyses the reaction 7-aminomethyl-7-carbaguanine + 2 NADP(+) = 7-cyano-7-deazaguanine + 2 NADPH + 3 H(+). It participates in tRNA modification; tRNA-queuosine biosynthesis. Its function is as follows. Catalyzes the NADPH-dependent reduction of 7-cyano-7-deazaguanine (preQ0) to 7-aminomethyl-7-deazaguanine (preQ1). This is NADPH-dependent 7-cyano-7-deazaguanine reductase from Campylobacter jejuni (strain RM1221).